Consider the following 916-residue polypeptide: Translation initiation factor IF-2 (916 aa).

The segment covering 151-191 has biased composition (basic and acidic residues); that stretch reads NLDEQQRLAESDRARDEAIQRKRDEEQAAKDRVEAERKAAE. Disordered stretches follow at residues 151-262 and 280-328; these read NLDE…SHVM and HLSA…ERPT. Low complexity-rich tracts occupy residues 192–243 and 293–305; these read EAAA…ATPA and RGKPTGRPGSSSS. A tr-type G domain is found at 415 to 584; the sequence is SRPPVVTIMG…SLQAEVLELK (170 aa). The segment at 424–431 is G1; the sequence is GHVDHGKT. 424–431 contributes to the GTP binding site; the sequence is GHVDHGKT. Residues 449–453 form a G2 region; sequence GITQH. Residues 470–473 are G3; that stretch reads DTPG. GTP contacts are provided by residues 470–474 and 524–527; these read DTPGH and NKID. The interval 524-527 is G4; it reads NKID. The G5 stretch occupies residues 560 to 562; the sequence is SAK.

This sequence belongs to the TRAFAC class translation factor GTPase superfamily. Classic translation factor GTPase family. IF-2 subfamily.

The protein localises to the cytoplasm. One of the essential components for the initiation of protein synthesis. Protects formylmethionyl-tRNA from spontaneous hydrolysis and promotes its binding to the 30S ribosomal subunits. Also involved in the hydrolysis of GTP during the formation of the 70S ribosomal complex. The chain is Translation initiation factor IF-2 from Xanthomonas campestris pv. campestris (strain B100).